Reading from the N-terminus, the 104-residue chain is L-rhamnose mutarotase (104 aa).

Tyr18 provides a ligand contact to substrate. The active-site Proton donor is the His22. Substrate-binding positions include Tyr41 and 76–77 (WW).

It belongs to the rhamnose mutarotase family. In terms of assembly, homodimer.

It localises to the cytoplasm. It catalyses the reaction alpha-L-rhamnose = beta-L-rhamnose. The protein operates within carbohydrate metabolism; L-rhamnose metabolism. Functionally, involved in the anomeric conversion of L-rhamnose. This is L-rhamnose mutarotase from Cronobacter sakazakii (strain ATCC BAA-894) (Enterobacter sakazakii).